The primary structure comprises 455 residues: Nuclear mRNA export protein THP1 (455 aa).

Residues 220–431 (IEYRYLLGRY…QLCVVKKTTM (212 aa)) enclose the PCI domain.

In terms of assembly, heterodimer with THP1. The SAC3-THP1 complex interacts with CDC31 and SUS1, and with the mRNA export factor MEX67-MTR2, the TREX complex component SUB2, and the nucleoporin NUP1.

The protein localises to the nucleus envelope. In terms of biological role, component of the SAC3-THP1 complex, which functions in transcription-coupled mRNA export from the nucleus to the cytoplasm. SAC3-THP1 functions in docking export-competent ribonucleoprotein particles (mRNPs) to the nuclear entrance of the nuclear pore complex (nuclear basket), by association with components of the nuclear mRNA export machinery (MEX67-MTR2 and SUB2) in the nucleoplasm and the nucleoporin NUP1 at the nuclear basket. THP1 binds to RNA in vitro. This Saccharomyces cerevisiae (strain ATCC 204508 / S288c) (Baker's yeast) protein is Nuclear mRNA export protein THP1 (THP1).